Here is a 754-residue protein sequence, read N- to C-terminus: Carbon catabolite repressor protein 4 homolog 6 (754 aa).

Disordered regions lie at residues 34-65 (PYRG…DQFV) and 85-176 (EPYR…KTPP). Positions 50 to 61 (FSDRPYNDDAGR) are enriched in basic and acidic residues. 2 stretches are compositionally biased toward polar residues: residues 96-106 (QRQQPPFNQNY) and 116-133 (GQWQ…NQNY). Residues 162-171 (KPSDYREWEY) are compositionally biased toward basic and acidic residues. Glu-237 contacts Mg(2+). Disordered stretches follow at residues 404-431 (VSAE…QGQV) and 494-558 (IENR…DQDI). Polar residues-rich tracts occupy residues 415–431 (NYTT…QGQV), 503–525 (GNLS…QHAS), and 534–545 (DRSVSSGLSETE).

This sequence belongs to the CCR4/nocturin family. As to quaternary structure, component of the CCR4-NOT complex, at least composed of CRR4 and CAF1 proteins. Mg(2+) is required as a cofactor.

It localises to the nucleus. The protein resides in the cytoplasm. The catalysed reaction is Exonucleolytic cleavage of poly(A) to 5'-AMP.. Its function is as follows. Acts as a catalytic component of the CCR4-NOT core complex, which in the nucleus seems to be a general transcription factor, and in the cytoplasm the major mRNA deadenylase involved in mRNA turnover. The protein is Carbon catabolite repressor protein 4 homolog 6 (CCR4-6) of Arabidopsis thaliana (Mouse-ear cress).